Consider the following 147-residue polypeptide: Receptor activity-modifying protein 3 (147 aa).

Residues methionine 1 to alanine 22 form the signal peptide. The Extracellular segment spans residues glutamine 23–aspartate 112. Asparagine 28, asparagine 57, asparagine 70, and asparagine 102 each carry an N-linked (GlcNAc...) asparagine glycan. 2 disulfide bridges follow: cysteine 39–cysteine 71 and cysteine 56–cysteine 103. Residues proline 113–valine 137 traverse the membrane as a helical segment. At tryptophan 138–leucine 147 the chain is on the cytoplasmic side.

Belongs to the RAMP family. In terms of assembly, heterodimer of CALCRL and RAMP3; interaction induces allosteric modulation of CALCRL function and ligand specificity for adrenomedullin/ADM and intermedin/ADM2. Heterodimer of CALCR and RAMP3; interaction form the receptor complex AMYR3 for amylin/IAPP. Interacts with GPER1.

Its subcellular location is the cell membrane. It localises to the membrane. Functionally, accessory protein that interacts with and modulates the function of G-protein coupled receptors including calcitonin gene-related peptide type 1 receptor (CALCRL), calcitonin receptor (CALCR) and G-protein coupled estrogen receptor 1 (GPER1). Required for the transport of CALCRL and GPER1 receptors to the plasma membrane. Plays a role in cardioprotection by reducing cardiac hypertrophy and perivascular fibrosis in a GPER1-dependent manner. Together with CALCRL, form a receptor complex for adrenomedullin/ADM and intermedin/ADM2. Together with CALCR, act as a receptor complex for amylin/IAPP. This is Receptor activity-modifying protein 3 from Rattus norvegicus (Rat).